The chain runs to 96 residues: Protein Vpr (96 aa).

A homooligomerization region spans residues 1-42 (MEQAPEDQGPQREPYNDWTLELLEELKNEAVRHFPRIWLHSL). 3 positions are modified to phosphoserine; by host: Ser79, Ser94, and Ser96.

The protein belongs to the HIV-1 VPR protein family. As to quaternary structure, homooligomer, may form homodimer. Interacts with p6-gag region of the Pr55 Gag precursor protein through a (Leu-X-X)4 motif near the C-terminus of the P6gag protein. Interacts with host UNG. May interact with host RAD23A/HHR23A. Interacts with host VPRBP/DCAF1, leading to hijack the CUL4A-RBX1-DDB1-DCAF1/VPRBP complex, mediating ubiquitination of host proteins such as TERT and ZGPAT and arrest of the cell cycle in G2 phase. Post-translationally, phosphorylated on several residues by host. These phosphorylations regulate VPR activity for the nuclear import of the HIV-1 pre-integration complex.

The protein resides in the virion. Its subcellular location is the host nucleus. It is found in the host extracellular space. In terms of biological role, during virus replication, may deplete host UNG protein, and incude G2-M cell cycle arrest. Acts by targeting specific host proteins for degradation by the 26S proteasome, through association with the cellular CUL4A-DDB1 E3 ligase complex by direct interaction with host VPRPB/DCAF-1. Cell cycle arrest reportedly occurs within hours of infection and is not blocked by antiviral agents, suggesting that it is initiated by the VPR carried into the virion. Additionally, VPR induces apoptosis in a cell cycle dependent manner suggesting that these two effects are mechanistically linked. Detected in the serum and cerebrospinal fluid of AIDS patient, VPR may also induce cell death to bystander cells. Its function is as follows. During virus entry, plays a role in the transport of the viral pre-integration (PIC) complex to the host nucleus. This function is crucial for viral infection of non-dividing macrophages. May act directly at the nuclear pore complex, by binding nucleoporins phenylalanine-glycine (FG)-repeat regions. This is Protein Vpr from Human immunodeficiency virus type 1 group M subtype B (strain 89.6) (HIV-1).